A 385-amino-acid chain; its full sequence is Leucine aminopeptidase 1 (385 aa).

An N-terminal signal peptide occupies residues 1–20; that stretch reads MKLPSLLSLGVAASTTIVAA. Residues 21–87 constitute a propeptide that is removed on maturation; sequence VPDQKPIGDT…FPKTFAQTTV (67 aa). The N-linked (GlcNAc...) asparagine glycan is linked to asparagine 177. 4 residues coordinate Zn(2+): histidine 185, aspartate 204, glutamate 243, and aspartate 270. Cysteine 319 and cysteine 323 form a disulfide bridge. Histidine 352 contributes to the Zn(2+) binding site.

This sequence belongs to the peptidase M28 family. M28E subfamily. As to quaternary structure, monomer. Zn(2+) is required as a cofactor.

It localises to the secreted. Its function is as follows. Extracellular aminopeptidase that allows assimilation of proteinaceous substrates. This chain is Leucine aminopeptidase 1 (LAP1), found in Ajellomyces capsulatus (strain NAm1 / WU24) (Darling's disease fungus).